We begin with the raw amino-acid sequence, 753 residues long: Protein-lysine N-methyltransferase SMYD4 (753 aa).

112–114 (RSA) is a binding site for S-adenosyl-L-methionine. An SET domain is found at 186 to 528 (DGVSVYFSSD…AGQEILHCYG (343 aa)). Residues cysteine 246, cysteine 249, cysteine 259, cysteine 262, cysteine 268, cysteine 272, histidine 281, and cysteine 285 each contribute to the Zn(2+) site. The MYND-type zinc finger occupies 246–285 (CHHCLSQSLSFVPCPKCSYARYCGESCQKDAWDQWHQWEC). S-adenosyl-L-methionine is bound by residues 467–468 (NH) and tyrosine 527.

It belongs to the class V-like SAM-binding methyltransferase superfamily.

The protein localises to the nucleus. The protein resides in the cytoplasm. The catalysed reaction is L-lysyl-[protein] + S-adenosyl-L-methionine = N(6)-methyl-L-lysyl-[protein] + S-adenosyl-L-homocysteine + H(+). Functionally, protein-lysine N-methyltransferase. Monomethylates PRMT5, modulating its transcriptional activity. May also act as a histone methyltransferase. Plays a critical role in cardiac development. Acts as a key epigenetic regulator of gene expression during cardiac development via its dual activities as a methyltransferase and negative regulator of HDAC1. This is Protein-lysine N-methyltransferase SMYD4 (smyd4) from Danio rerio (Zebrafish).